Reading from the N-terminus, the 238-residue chain is Flagellar L-ring protein (238 aa).

Positions 1–23 are cleaved as a signal peptide; that stretch reads MVKLFSYKIKYYLTAFFIIIIQS. Cysteine 24 is lipidated: N-palmitoyl cysteine. Residue cysteine 24 is the site of S-diacylglycerol cysteine attachment.

It belongs to the FlgH family. As to quaternary structure, the basal body constitutes a major portion of the flagellar organelle and consists of four rings (L,P,S, and M) mounted on a central rod.

The protein localises to the cell outer membrane. It localises to the bacterial flagellum basal body. Functionally, assembles around the rod to form the L-ring and probably protects the motor/basal body from shearing forces during rotation. The protein is Flagellar L-ring protein of Buchnera aphidicola subsp. Schizaphis graminum (strain Sg).